We begin with the raw amino-acid sequence, 130 residues long: Histone H2A.6 (130 aa).

Over residues 1–12 the composition is skewed to gly residues; the sequence is MAGRGKTLGSGG. The interval 1–23 is disordered; sequence MAGRGKTLGSGGAKKATSRSSKA.

The protein belongs to the histone H2A family. The nucleosome is a histone octamer containing two molecules each of H2A, H2B, H3 and H4 assembled in one H3-H4 heterotetramer and two H2A-H2B heterodimers. The octamer wraps approximately 147 bp of DNA. Interacts with VIP1. Post-translationally, not ubiquitinated. In terms of tissue distribution, low level of expression, mainly in dividing tissues: floral buds, margins of newly emerging leaves, expanding leaves and the meristematic zone of root tips. Also expressed in many non-dividing cells of the elongation zone of the root.

Its subcellular location is the nucleus. It localises to the chromosome. Core component of nucleosome. Nucleosomes wrap and compact DNA into chromatin, limiting DNA accessibility to the cellular machineries which require DNA as a template. Histones thereby play a central role in transcription regulation, DNA repair, DNA replication and chromosomal stability. DNA accessibility is regulated via a complex set of post-translational modifications of histones, also called histone code, and nucleosome remodeling. Required for the T-DNA integration step of plant transformation by Agrobacterium. May play an important role in illegitimate recombination. This is Histone H2A.6 (RAT5) from Arabidopsis thaliana (Mouse-ear cress).